Here is a 169-residue protein sequence, read N- to C-terminus: MTDTQNRVAMGYIKGVFGIKGWLKIAANTEYSDSLLDYPEWHLVKDGKTISVTLEAGKVVNGELQVKFEGINDRDLAFSLRGYTIEIPREAFAPTEEDEYYWTDLVGMTVVNKDHTVLGKVSNLMETGANDVLMIDGEHGQILIPFVSQYIETVDTGSKTITADWGLDY.

The region spanning 97-169 (EDEYYWTDLV…TITADWGLDY (73 aa)) is the PRC barrel domain.

Belongs to the RimM family. Binds ribosomal protein uS19.

It is found in the cytoplasm. Functionally, an accessory protein needed during the final step in the assembly of 30S ribosomal subunit, possibly for assembly of the head region. Essential for efficient processing of 16S rRNA. May be needed both before and after RbfA during the maturation of 16S rRNA. It has affinity for free ribosomal 30S subunits but not for 70S ribosomes. This Neisseria meningitidis serogroup B (strain ATCC BAA-335 / MC58) protein is Ribosome maturation factor RimM.